The primary structure comprises 377 residues: RIB43A-like with coiled-coils protein 2 (377 aa).

Coiled-coil stretches lie at residues 217-250 (NKNQALESAEKKIQERKQEQEDNLAEISNMLRGD) and 282-308 (EEIRLVQRQQVQEKLRLQEEERQRDMD).

It belongs to the RIB43A family. As to quaternary structure, microtubule inner protein component of sperm flagellar doublet microtubules. As to expression, expressed in trachea multiciliated cells.

Its subcellular location is the cytoplasm. It is found in the cytoskeleton. The protein localises to the cilium axoneme. It localises to the flagellum axoneme. Functionally, microtubule inner protein (MIP) part of the dynein-decorated doublet microtubules (DMTs) in cilia axoneme, which is required for motile cilia beating. The chain is RIB43A-like with coiled-coils protein 2 from Bos taurus (Bovine).